Consider the following 497-residue polypeptide: Aldehyde dehydrogenase (497 aa).

241 to 246 (GSTLVG) serves as a coordination point for NAD(+). Glutamate 264 serves as the catalytic Proton acceptor. Residue cysteine 298 is the Nucleophile of the active site.

Belongs to the aldehyde dehydrogenase family.

It carries out the reaction an aldehyde + NAD(+) + H2O = a carboxylate + NADH + 2 H(+). It participates in alcohol metabolism; ethanol degradation; acetate from ethanol: step 2/2. This chain is Aldehyde dehydrogenase (aldA), found in Emericella nidulans (strain FGSC A4 / ATCC 38163 / CBS 112.46 / NRRL 194 / M139) (Aspergillus nidulans).